The primary structure comprises 141 residues: Organic hydroperoxide resistance protein-like 1 (141 aa).

Positions 1 to 20 (MAVNYETKATNTGGRNGHVQ) are disordered.

This sequence belongs to the OsmC/Ohr family.

The polypeptide is Organic hydroperoxide resistance protein-like 1 (Staphylococcus saprophyticus subsp. saprophyticus (strain ATCC 15305 / DSM 20229 / NCIMB 8711 / NCTC 7292 / S-41)).